Reading from the N-terminus, the 1059-residue chain is Dihydropyrimidine dehydrogenase [NADP(+)] (1059 aa).

The 4Fe-4S ferredoxin-type 1 domain maps to 84-118; it reads ERGALKEAMRCLKCADAPCQKSCPTQLDVKSFITS. [4Fe-4S] cluster-binding residues include Cys94, Cys97, Cys102, Cys106, Cys145, Cys151, Cys155, and Gln171. FAD is bound by residues 207–211, 231–239, Arg248, and Leu274; these read GCGPA and EKRAYIGGL. NADP(+) contacts are provided by residues 354–357, 378–379, Arg385, 451–453, and 495–501; these read AGDT, RK, AFG, and DVAGVAE. 494-503 lines the FAD pocket; it reads GDVAGVAETT. Residues Ser564 and 588–589 contribute to the FMN site; that span reads KT. Substrate contacts are provided by residues Asn623 and 682-684; that span reads NLS. Cys685 serves as the catalytic Proton acceptor. Lys723 is a binding site for FMN. Substrate is bound at residue 750–751; the sequence is NT. FMN-binding positions include Gly781, 807–809, and 830–831; these read TGG and CS. 2 consecutive 4Fe-4S ferredoxin-type domains span residues 955-987 and 989-1019; these read KVAIIDDDMCINCGKCYMTCNDSGYQAITFDPV and HQPHVTEDDCTGCTLCYSVCPIPECIEMVPR. The [4Fe-4S] cluster site is built by Cys964, Cys967, Cys970, Cys974, Cys998, Cys1001, Cys1004, and Cys1008.

Belongs to the dihydropyrimidine dehydrogenase family. The cofactor is [4Fe-4S] cluster. Requires FAD as cofactor. FMN serves as cofactor.

It carries out the reaction 5,6-dihydrouracil + NADP(+) = uracil + NADPH + H(+). It participates in amino-acid biosynthesis; beta-alanine biosynthesis. Functionally, involved in pyrimidine base degradation. Catalyzes the reduction of uracil and thymine. Involved in the degradation of the chemotherapeutic drug 5-fluorouracil. In Caenorhabditis elegans, this protein is Dihydropyrimidine dehydrogenase [NADP(+)] (dpyd-1).